Consider the following 374-residue polypeptide: tRNA-specific 2-thiouridylase MnmA (374 aa).

ATP-binding positions include 12 to 19 and M38; that span reads GMSGGVDS. Positions 98–100 are interaction with target base in tRNA; that stretch reads NPD. The active-site Nucleophile is the C103. Residues C103 and C202 are joined by a disulfide bond. Residue G128 participates in ATP binding. Residues 152-154 form an interaction with tRNA region; the sequence is KDQ. C202 (cysteine persulfide intermediate) is an active-site residue. The segment at 316–317 is interaction with tRNA; the sequence is RY.

This sequence belongs to the MnmA/TRMU family.

It is found in the cytoplasm. It catalyses the reaction S-sulfanyl-L-cysteinyl-[protein] + uridine(34) in tRNA + AH2 + ATP = 2-thiouridine(34) in tRNA + L-cysteinyl-[protein] + A + AMP + diphosphate + H(+). Its function is as follows. Catalyzes the 2-thiolation of uridine at the wobble position (U34) of tRNA, leading to the formation of s(2)U34. This chain is tRNA-specific 2-thiouridylase MnmA, found in Vibrio vulnificus (strain YJ016).